The primary structure comprises 168 residues: Venom nerve growth factor (168 aa).

The N-terminal stretch at 1–18 (MSMLCYTLIIAFLIGIWA) is a signal peptide. The propeptide occupies 19–123 (APKSEDNVSL…ADSLNRNIRA (105 aa)). The N-linked (GlcNAc...) asparagine glycan is linked to N25. Positions 48–70 (LKTSQNTDQHSPAPKKAEDQEFG) are disordered. A glycan (N-linked (GlcNAc...) asparagine) is linked at N148.

Belongs to the NGF-beta family. Homodimer; non-covalently linked. In terms of tissue distribution, expressed by the venom gland.

It is found in the secreted. In terms of biological role, nerve growth factor is important for the development and maintenance of the sympathetic and sensory nervous systems. It stimulates division and differentiation of sympathetic and embryonic sensory neurons as well as basal forebrain cholinergic neurons in the brain. Its relevance in the snake venom is not clear. However, it has been shown to inhibit metalloproteinase-dependent proteolysis of platelet glycoprotein Ib alpha, suggesting a metalloproteinase inhibition to prevent metalloprotease autodigestion and/or protection against prey proteases. The chain is Venom nerve growth factor from Echis ocellatus (Ocellated saw-scaled viper).